The primary structure comprises 368 residues: DNA replication and repair protein RecF (368 aa).

30–37 is a binding site for ATP; it reads GDNGAGKT.

The protein belongs to the RecF family.

It is found in the cytoplasm. Its function is as follows. The RecF protein is involved in DNA metabolism; it is required for DNA replication and normal SOS inducibility. RecF binds preferentially to single-stranded, linear DNA. It also seems to bind ATP. In Xanthomonas euvesicatoria pv. vesicatoria (strain 85-10) (Xanthomonas campestris pv. vesicatoria), this protein is DNA replication and repair protein RecF.